The following is a 264-amino-acid chain: MDVSQTIVLALIQGLSEFLPISSSAHLILVPKLTNWTDQGLIFDVVVHMGTLSAVIFYYQAMIRSLFFDFYYSIIKRQIIGQSKLAWGVLLGTIPIGLVGMIFKDFVAVDLRSIEIIAYTTLVFGLLLGFASWFNHKNKNPKSTISWIDVSFVSMMQILALIPGTSRSGITITACMLVGLSRKLSIQFSFLLSIPVITLSLILMLIDLYHQTQLVNVSLLVLGFVISTISAYATIIFVIRLIDMVGMTPFVIYRLILGVFLFFL.

8 helical membrane passes run 7–27, 41–61, 89–109, 114–134, 144–164, 186–206, 219–239, and 244–264; these read IVLA…SAHL, LIFD…YYQA, VLLG…FVAV, IEII…ASWF, TISW…LIPG, IQFS…LMLI, LLVL…IFVI, and MVGM…LFFL.

Belongs to the UppP family.

The protein localises to the cell inner membrane. The enzyme catalyses di-trans,octa-cis-undecaprenyl diphosphate + H2O = di-trans,octa-cis-undecaprenyl phosphate + phosphate + H(+). Its function is as follows. Catalyzes the dephosphorylation of undecaprenyl diphosphate (UPP). Confers resistance to bacitracin. The protein is Undecaprenyl-diphosphatase of Vesicomyosocius okutanii subsp. Calyptogena okutanii (strain HA).